The sequence spans 286 residues: Putative sensory transducer protein YfmS (286 aa).

The Methyl-accepting transducer domain maps to 68 to 286; it reads ITDAIRSNQK…KMAEKALEEE (219 aa).

It belongs to the methyl-accepting chemotaxis (MCP) protein family.

Functionally, chemotactic-signal transducers respond to changes in the concentration of attractants and repellents in the environment, transduce a signal from the outside to the inside of the cell, and facilitate sensory adaptation through the variation of the level of methylation. Attractants increase the level of methylation while repellents decrease the level of methylation. The polypeptide is Putative sensory transducer protein YfmS (yfmS) (Bacillus subtilis (strain 168)).